The sequence spans 456 residues: Hydroxymethylglutaryl-CoA synthase ERG13 (456 aa).

(3S)-3-hydroxy-3-methylglutaryl-CoA is bound at residue Ala35. Residue Glu86 is the Proton donor/acceptor of the active site. The (3S)-3-hydroxy-3-methylglutaryl-CoA site is built by Cys118, Asn156, Thr160, Ser210, His259, Lys268, Asn336, and Ser370. Catalysis depends on Cys118, which acts as the Acyl-thioester intermediate. His259 functions as the Proton donor/acceptor in the catalytic mechanism.

This sequence belongs to the thiolase-like superfamily. HMG-CoA synthase family.

The enzyme catalyses acetoacetyl-CoA + acetyl-CoA + H2O = (3S)-3-hydroxy-3-methylglutaryl-CoA + CoA + H(+). It participates in metabolic intermediate biosynthesis; (R)-mevalonate biosynthesis; (R)-mevalonate from acetyl-CoA: step 2/3. In terms of biological role, hydroxymethylglutaryl-CoA synthase; part of the first module of ergosterol biosynthesis pathway that includes the early steps of the pathway, conserved across all eukaryotes, and which results in the formation of mevalonate from acetyl-coenzyme A (acetyl-CoA). ERG13 condenses acetyl-CoA with acetoacetyl-CoA to form hydroxymethylglutaryl-CoA (HMG-CoA). The first module starts with the action of the cytosolic acetyl-CoA acetyltransferase ERG10B that catalyzes the formation of acetoacetyl-CoA. The hydroxymethylglutaryl-CoA synthases ERG13 then condenses acetyl-CoA with acetoacetyl-CoA to form HMG-CoA. The rate-limiting step of the early module is the reduction to mevalonate by the 3-hydroxy-3-methylglutaryl-coenzyme A (HMG-CoA) reductases HMG1. This is Hydroxymethylglutaryl-CoA synthase ERG13 from Gibberella zeae (strain ATCC MYA-4620 / CBS 123657 / FGSC 9075 / NRRL 31084 / PH-1) (Wheat head blight fungus).